The sequence spans 407 residues: Arrestin homolog (407 aa).

This sequence belongs to the arrestin family.

The protein is Arrestin homolog of Locusta migratoria (Migratory locust).